The following is a 244-amino-acid chain: Claudin-12 (244 aa).

Residues 1 to 10 lie on the Cytoplasmic side of the membrane; it reads MGCRDVHAAT. A helical membrane pass occupies residues 11 to 31; the sequence is VLSFLCGIASVAGLFAGTLLP. Over 32–87 the chain is Extracellular; that stretch reads NWRKLRLITFNRNEKNLTVYTGLWVKCARYDGGNDCLMYDAAWYSSVDQLDLRVLQ. Residues 88–108 traverse the membrane as a helical segment; sequence FALPLSILIAMGALLLCLIGM. Over 109–135 the chain is Cytoplasmic; it reads CNTAFRSSVPNIKLAKCLVNSAGCHLV. Residues 136–156 traverse the membrane as a helical segment; it reads AGLLFFLAGTVSLSPSIWVIF. Residues 157–174 are Extracellular-facing; that stretch reads YNIHLNRKFEPVFAFDYA. Residues 175–195 form a helical membrane-spanning segment; that stretch reads VYVTVASAGGLFMTALLLFIW. Over 196–244 the chain is Cytoplasmic; that stretch reads YCACKSLPSPFWQPLYSHPPGMHTYSQPYSARSRLSAIEIDIPVVSHTT. Ser228 and Ser231 each carry phosphoserine.

Belongs to the claudin family. In terms of assembly, interacts with OCLN.

The protein resides in the cell junction. The protein localises to the tight junction. It is found in the cell membrane. Plays a major role in tight junction-specific obliteration of the intercellular space, through calcium-independent cell-adhesion activity. The protein is Claudin-12 (CLDN12) of Bos taurus (Bovine).